The primary structure comprises 83 residues: MADTSQKPDKATSAAQARQVIDVFHEISTLLNAELDRGTLSICISLIENGINPEALATVVRELKKDADEVRRQIAEGGVRNGE.

Belongs to the MOZART1 family. In terms of assembly, part of the gamma-tubulin complex.

It is found in the cytoplasm. The protein localises to the cytoskeleton. It localises to the microtubule organizing center. The protein resides in the spindle pole body. Its function is as follows. Required for gamma-tubulin complex recruitment to the microtubule organizing center (MTOC). This chain is Mitotic-spindle organizing protein 1, found in Botryotinia fuckeliana (strain B05.10) (Noble rot fungus).